Reading from the N-terminus, the 522-residue chain is Perilipin-1 (522 aa).

Ser81 carries the post-translational modification Phosphoserine. Thr85 carries the post-translational modification Phosphothreonine. A phosphoserine mark is found at Ser126, Ser130, Ser132, Ser137, and Ser174. Disordered stretches follow at residues Asp195–Ser217 and Leu287–Lys318. The segment covering Gln291–Thr314 has biased composition (acidic residues). The required for interaction with CIDEC stretch occupies residues Gln291–Phe319. Residues Thr299 and Thr301 each carry the phosphothreonine modification. Phosphoserine is present on residues Ser382, Ser384, and Ser408. Residues Glu413 to Ser522 are disordered. Residues Ser414–Ala435 are compositionally biased toward basic and acidic residues. A phosphoserine mark is found at Ser436, Ser497, and Ser499.

Belongs to the perilipin family. As to quaternary structure, interacts with ABHD5. Interacts with CIDEC. Interacts with AQP7. Post-translationally, major cAMP-dependent protein kinase-substrate in adipocytes, also dephosphorylated by PP1. When phosphorylated, may be maximally sensitive to HSL and when unphosphorylated, may play a role in the inhibition of lipolysis, by acting as a barrier in lipid droplet. Detected in adipocytes from white adipose tissue (at protein level). Detected in visceral adipose tissue and mammary gland.

It is found in the endoplasmic reticulum. The protein resides in the lipid droplet. In terms of biological role, modulator of adipocyte lipid metabolism. Coats lipid storage droplets to protect them from breakdown by hormone-sensitive lipase (HSL). Its absence may result in leanness. Plays a role in unilocular lipid droplet formation by activating CIDEC. Their interaction promotes lipid droplet enlargement and directional net neutral lipid transfer. May modulate lipolysis and triglyceride levels. The sequence is that of Perilipin-1 (PLIN1) from Homo sapiens (Human).